The following is a 444-amino-acid chain: MPFIANTDDDRRSMLQAIGVGSFEELIPDIPSEFCLKEALSLFPSMSEMEVASLLDRLASANRTSPDYVSFIGGGAYDHYIPAALKTIVSRSEFYTAYTPYQAEVSQGTLQAIYEYQSMICRLYGMSVANASLYDGATAMAEAVSMAMNVTGRSTVLVAGKIHPNTSAVLKTFIEAGGKASVVQNVLTDGVCDIAALESRMSDQIAAVIVQQPNFYGCLEDVEAIGALARSHGALFIVSADPVSLGLLNAPGRYGADIAVGEGQPLGSALNFGGPYLGIFAVAEKYVRKIPGRLVGMTKDRDGEDGFILTLQTREQHIRREKATSNICTNQALNALQAVVYLSLMGKDGLCQVAEHCLQKAHYLADKIADLPGYSLRFAGPFFREFVVNTPVDASVVVNTMMEKGFFAGYDLGIHDDSGLLIAVTEKRSRAEMDSFVENLGAIS.

Belongs to the GcvP family. N-terminal subunit subfamily. As to quaternary structure, the glycine cleavage system is composed of four proteins: P, T, L and H. In this organism, the P 'protein' is a heterodimer of two subunits.

It carries out the reaction N(6)-[(R)-lipoyl]-L-lysyl-[glycine-cleavage complex H protein] + glycine + H(+) = N(6)-[(R)-S(8)-aminomethyldihydrolipoyl]-L-lysyl-[glycine-cleavage complex H protein] + CO2. Functionally, the glycine cleavage system catalyzes the degradation of glycine. The P protein binds the alpha-amino group of glycine through its pyridoxal phosphate cofactor; CO(2) is released and the remaining methylamine moiety is then transferred to the lipoamide cofactor of the H protein. This chain is Probable glycine dehydrogenase (decarboxylating) subunit 1, found in Prosthecochloris aestuarii (strain DSM 271 / SK 413).